The sequence spans 28 residues: M-poneritoxin-Dq4b/U1-poneritoxin-Dq4c/U1-poneritoxin-Dq4d (28 aa).

A Methionine sulfoxide; in form U1-PONTX-Dq4d modification is found at Met20. Ala28 carries the post-translational modification Alanine amide; in form Dq-1362 and U1-PONTX-Dq4d.

Post-translationally, occurs in 3 forms, M-PONTX-Dq4b has an amidated Ala-28, U1-PONTX-Dq4d has an amidated Ala-28 and an oxidized Met-20, U1-PONTX-Dq4c has no modifications at either Met-20 or Ala-28. In terms of tissue distribution, expressed by the venom gland.

The protein resides in the secreted. In terms of biological role, M-poneritoxin-Dq4b: this synthetic peptide has antimicrobial activity against Gram-positive bacteria B.amyloliquefacies S499 (MIC=0.1 mM), L.monocytogenes 2231 and S.aureus ATCC 29213, against Gram-negative bacteria P.putida BTP1, P.aeruginosa PaO1 and E.coli ATCC 10536, and against the fungi S.cerevisiae, R.mucilaginosa and C.cucumerinum. Not active against the fungi F.oxysporum and B.cinerea. This Dinoponera quadriceps (South American ant) protein is M-poneritoxin-Dq4b/U1-poneritoxin-Dq4c/U1-poneritoxin-Dq4d.